Reading from the N-terminus, the 471-residue chain is Serine hydroxymethyltransferase 4 (471 aa).

Met-1 carries the N-acetylmethionine modification. L-serine is bound at residue Ser-39. Pemetrexed is bound by residues Ser-39, Tyr-59, and Glu-61. Positions 61 and 69 each coordinate L-serine. Pemetrexed is bound by residues 105–107 (SGS), His-134, Ser-190, and His-218. Residues His-218 and Lys-244 each contribute to the L-serine site. N6-(pyridoxal phosphate)lysine is present on Lys-244. Gly-290 is a pemetrexed binding site. Lys-373 is a methotrexate binding site. Residue Arg-389 participates in L-serine binding. A pemetrexed-binding site is contributed by Arg-389.

The protein belongs to the SHMT family. As to quaternary structure, homotetramer. Interacts with UBP16. It depends on pyridoxal 5'-phosphate as a cofactor. In terms of tissue distribution, mostly expressed in flowers, less abundant in roots, inflorescence stems, and siliques, and barely detectable in leaves.

The protein localises to the cytoplasm. It carries out the reaction (6R)-5,10-methylene-5,6,7,8-tetrahydrofolate + glycine + H2O = (6S)-5,6,7,8-tetrahydrofolate + L-serine. It participates in one-carbon metabolism; tetrahydrofolate interconversion. With respect to regulation, inhibited by the antifolate drugs methotrexate and pemetrexed. In terms of biological role, catalyzes the interconversion of serine and glycine with the conversion of tetrahydrofolate (THF) into 5,10-methylene-THF. The sequence is that of Serine hydroxymethyltransferase 4 from Arabidopsis thaliana (Mouse-ear cress).